The following is an 837-amino-acid chain: Tuftelin-interacting protein 11 (837 aa).

Composition is skewed to basic and acidic residues over residues 1 to 13 (MSLS…GEGR) and 50 to 64 (TYGV…DERP). 2 disordered regions span residues 1–21 (MSLS…DDER) and 50–136 (TYGV…AGGT). Residues 1–50 (MSLSHLYRDGEGRVDDDDDERENFEITDWDLQNEFNPNRQRHWQTKEEAT) form a required for interaction with DHX15 region. A phosphoserine mark is found at Ser-2, Ser-59, and Ser-98. A compositionally biased stretch (acidic residues) spans 91–102 (EEAELDDSEDEE). Basic and acidic residues predominate over residues 103 to 116 (KPGKQEELPKDLGP). Ser-144 carries the phosphoserine modification. The G-patch domain occupies 149–195 (TKGIGQKLLQKMGYVPGRGLGKNAQGIINPIEAKQRKGKGAVGAYGS). The tract at residues 183–236 (QRKGKGAVGAYGSERTTQSLQDFPVVDSEEEAEEEFQKELSQWRKDPSGSKKKP) is disordered. Ser-210 carries the post-translational modification Phosphoserine. The segment covering 217-231 (EFQKELSQWRKDPSG) has biased composition (basic and acidic residues). The Nuclear localization signal motif lies at 700–705 (VKDKFN). Residues 710–734 (IMNRAVSSNVGAYMQPGARENIAYL) form a required for nuclear speckle localization region.

Belongs to the TFP11/STIP family. As to quaternary structure, identified in the spliceosome C complex. Found in the Intron Large (IL) complex, a post-mRNA release spliceosomal complex containing the excised intron, U2, U5 and U6 snRNPs, and splicing factors. Interacts with TUFT1. Interacts with DHX15; indicative for a recruitment of DHX15 to the IL complex. Interacts with GCFC2.

It localises to the cytoplasm. The protein localises to the nucleus. Involved in pre-mRNA splicing, specifically in spliceosome disassembly during late-stage splicing events. Intron turnover seems to proceed through reactions in two lariat-intron associated complexes termed Intron Large (IL) and Intron Small (IS). In cooperation with DHX15 seems to mediate the transition of the U2, U5 and U6 snRNP-containing IL complex to the snRNP-free IS complex leading to efficient debranching and turnover of excised introns. May play a role in the differentiation of ameloblasts and odontoblasts or in the forming of the enamel extracellular matrix. This chain is Tuftelin-interacting protein 11 (TFIP11), found in Oryctolagus cuniculus (Rabbit).